The sequence spans 807 residues: Glucocorticoid receptor (807 aa).

Disordered stretches follow at residues 1–47 (MDQG…LPSP), 246–284 (TDVNGTDQQHPLQHHQHQQQQHRHLLQHQQHQLHHQHQQ), and 412–438 (FSVSFSSSSPRTGENSSSAVPGLSKPS). The tract at residues 1 to 444 (MDQGGLKRNC…SKPSGPTHKI (444 aa)) is modulating. Over residues 257 to 282 (LQHHQHQQQQHRHLLQHQQHQLHHQH) the composition is skewed to basic residues. A compositionally biased stretch (low complexity) spans 412–421 (FSVSFSSSSP). 2 NR C4-type zinc fingers span residues 445-465 (CLVCSDEASGCHYGVVTCGSC) and 490-514 (CAGRNDCIIDKIRRKNCPACRFRKC). A DNA-binding region (nuclear receptor) is located at residues 445-519 (CLVCSDEASG…RFRKCLQAGM (75 aa)). The hinge stretch occupies residues 520–553 (NLEARKNKKLIKMKVHRPTGSAEPISNMPVPVIP). Residues 554-788 (RMPQLVPTML…FPEMLAEIIT (235 aa)) enclose the NR LBD domain.

Belongs to the nuclear hormone receptor family. NR3 subfamily. Heteromultimeric cytoplasmic complex with HSP90. Upon ligand binding the complex undergoes a conformation change and moves to the nucleus, where it dissociates. Binds to DNA as a homodimer, and as heterodimer with NR3C2. Interaction with numerous other transcription factors modulates transcription activation.

The protein resides in the cytoplasm. It localises to the nucleus. Its subcellular location is the mitochondrion. It is found in the cytoskeleton. The protein localises to the spindle. The protein resides in the microtubule organizing center. It localises to the centrosome. Its function is as follows. Receptor for glucocorticoids (GC). Has a dual mode of action: as a transcription factor that binds to glucocorticoid response elements (GRE), both for nuclear and mitochondrial DNA, and as a modulator of other transcription factors. Affects inflammatory responses, cellular proliferation and differentiation in target tissues. Involved in chromatin remodeling. Plays a role in rapid mRNA degradation by binding to the 5' UTR of target mRNAs and interacting with PNRC2 in a ligand-dependent manner which recruits the RNA helicase UPF1 and the mRNA-decapping enzyme DCP1A, leading to RNA decay. Could act as a coactivator for STAT5-dependent transcription upon growth hormone (GH) stimulation and could reveal an essential role of hepatic GR in the control of body growth. Mediates glucocorticoid-induced apoptosis. Promotes accurate chromosome segregation during mitosis. May act as a tumor suppressor. May play a negative role in adipogenesis through the regulation of lipolytic and antilipogenic gene expression. This Paralichthys olivaceus (Bastard halibut) protein is Glucocorticoid receptor (nr3c1).